The sequence spans 283 residues: Bis(5'-nucleosyl)-tetraphosphatase, symmetrical (283 aa).

Belongs to the Ap4A hydrolase family.

It catalyses the reaction P(1),P(4)-bis(5'-adenosyl) tetraphosphate + H2O = 2 ADP + 2 H(+). In terms of biological role, hydrolyzes diadenosine 5',5'''-P1,P4-tetraphosphate to yield ADP. The polypeptide is Bis(5'-nucleosyl)-tetraphosphatase, symmetrical (Pseudomonas aeruginosa (strain LESB58)).